We begin with the raw amino-acid sequence, 154 residues long: MAYAVIRIRGRVGVRRDIADTLKMLRLHKVNHCVIIPETETFKGMLQKVKDYVTWGEIDKDTLVKLILKRGRLPGNKKVNPEIIKELTGMDVEELAEKIINGEIKLKETPLKPVFRLHPPRKGFERGGIKKPFSVGGALGYRGEKINELLEKMM.

Belongs to the universal ribosomal protein uL30 family. Part of the 50S ribosomal subunit.

This Methanocaldococcus jannaschii (strain ATCC 43067 / DSM 2661 / JAL-1 / JCM 10045 / NBRC 100440) (Methanococcus jannaschii) protein is Large ribosomal subunit protein uL30.